The sequence spans 478 residues: MAQSKLYPVVMAGGSGSRLWPLSRVLYPKQFLCLKGDLTMLQTTICRLNGVECESPVVICNEQHRFIVAEQLRQLNKLTENIILEPAGRNTAPAIALAALAAKRHSPESDPLMLVLAADHVIADEDAFRAAVRNAMPYAEAGKLVTFGIVPDLPETGYGYIRRGEVSAGEQDMVAFEVAQFVEKPNLETAQAYVASGEYYWNSGMFLFRAGRYLEELKKYRPDILDACEKAMSAVDPDLNFIRVDEEAFLACPEESVDYAVMERTADAVVVPMDAGWSDVGSWSSLWEISAHTAEGNVCHGDVINHKTENSYVYAESGLVTTVGVKDLVVVQTKDAVLIADRNAVQDVKKVVEQIKADGRHEHRVHREVYRPWGKYDSIDAGDRYQVKRITVKPGEGLSVQMHHHRAEHWVVVAGTAKVTIDGDIKLLGENESIYIPLGATHCLENPGKIPLDLIEVRSGSYLEEDDVVRFADRYGRV.

Belongs to the mannose-6-phosphate isomerase type 2 family.

The enzyme catalyses alpha-D-mannose 1-phosphate + GTP + H(+) = GDP-alpha-D-mannose + diphosphate. The protein operates within nucleotide-sugar biosynthesis; GDP-alpha-D-mannose biosynthesis; GDP-alpha-D-mannose from alpha-D-mannose 1-phosphate (GTP route): step 1/1. Functionally, involved in the biosynthesis of the capsular polysaccharide colanic acid. The chain is Mannose-1-phosphate guanylyltransferase (manC) from Escherichia coli (strain K12).